Reading from the N-terminus, the 1224-residue chain is Coatomer subunit alpha (1224 aa).

WD repeat units lie at residues 3 to 38, 42 to 80, 84 to 122, and 126 to 164; these read TKFE…LWDY, TLID…VWNY, RCLF…VWNW, and TCVC…VWDI. Position 173 is a phosphoserine (S173). T185 carries the post-translational modification Phosphothreonine. 3 WD repeats span residues 195-234, 241-278, and 282-319; these read AVVK…IWRM, EVDT…VWDM, and TGVQ…VFKL. Phosphoserine is present on S402. Phosphothreonine is present on T591. S895 carries the post-translational modification Phosphoserine. R965 is subject to Omega-N-methylarginine. S1193 is modified (phosphoserine).

Oligomeric complex that consists of at least the alpha, beta, beta', gamma, delta, epsilon and zeta subunits. Interacts with SCYL1. Interacts with JAGN1. Interacts with TMEM41B. Interacts with SVEP1. Probably interacts with PEX11A. As to expression, uniformly expressed in a wide range of adult and fetal tissues. Xenin is found in gastric, duodenal and jejunal mucosa. Circulates in the blood. Seems to be confined to specific endocrine cells.

Its subcellular location is the cytoplasm. It localises to the golgi apparatus membrane. The protein localises to the cytoplasmic vesicle. The protein resides in the COPI-coated vesicle membrane. It is found in the secreted. Its function is as follows. The coatomer is a cytosolic protein complex that binds to dilysine motifs and reversibly associates with Golgi non-clathrin-coated vesicles, which further mediate biosynthetic protein transport from the ER, via the Golgi up to the trans Golgi network. Coatomer complex is required for budding from Golgi membranes, and is essential for the retrograde Golgi-to-ER transport of dilysine-tagged proteins. In mammals, the coatomer can only be recruited by membranes associated to ADP-ribosylation factors (ARFs), which are small GTP-binding proteins; the complex also influences the Golgi structural integrity, as well as the processing, activity, and endocytic recycling of LDL receptors. In terms of biological role, xenin stimulates exocrine pancreatic secretion. It inhibits pentagastrin-stimulated secretion of acid, to induce exocrine pancreatic secretion and to affect small and large intestinal motility. In the gut, xenin interacts with the neurotensin receptor. The protein is Coatomer subunit alpha (COPA) of Homo sapiens (Human).